The following is a 96-amino-acid chain: Putative pterin-4-alpha-carbinolamine dehydratase (96 aa).

This sequence belongs to the pterin-4-alpha-carbinolamine dehydratase family.

The catalysed reaction is (4aS,6R)-4a-hydroxy-L-erythro-5,6,7,8-tetrahydrobiopterin = (6R)-L-erythro-6,7-dihydrobiopterin + H2O. In Prochlorococcus marinus (strain MIT 9303), this protein is Putative pterin-4-alpha-carbinolamine dehydratase.